We begin with the raw amino-acid sequence, 175 residues long: uncharacterized protein (175 aa).

Residues 1-11 (METWRKGSFRN) constitute a mitochondrion transit peptide. Residues 29–48 (QGSILSQASTAGGDHEEYSN) form a disordered region.

The protein resides in the mitochondrion. This is an uncharacterized protein from Mus musculus (Mouse).